Here is a 20-residue protein sequence, read N- to C-terminus: Protein YfiS (20 aa).

This is Protein YfiS from Escherichia coli (strain K12).